We begin with the raw amino-acid sequence, 316 residues long: 4-hydroxy-3-methylbut-2-enyl diphosphate reductase (316 aa).

[4Fe-4S] cluster is bound at residue Cys-17. The (2E)-4-hydroxy-3-methylbut-2-enyl diphosphate site is built by His-46 and His-79. Residues His-46 and His-79 each contribute to the dimethylallyl diphosphate site. Residues His-46 and His-79 each contribute to the isopentenyl diphosphate site. A [4Fe-4S] cluster-binding site is contributed by Cys-101. His-129 is a (2E)-4-hydroxy-3-methylbut-2-enyl diphosphate binding site. Residue His-129 participates in dimethylallyl diphosphate binding. His-129 is an isopentenyl diphosphate binding site. The Proton donor role is filled by Glu-131. Thr-170 serves as a coordination point for (2E)-4-hydroxy-3-methylbut-2-enyl diphosphate. Residue Cys-200 participates in [4Fe-4S] cluster binding. (2E)-4-hydroxy-3-methylbut-2-enyl diphosphate is bound by residues Ser-228, Ser-229, Asn-230, and Ser-273. Dimethylallyl diphosphate is bound by residues Ser-228, Ser-229, Asn-230, and Ser-273. Residues Ser-228, Ser-229, Asn-230, and Ser-273 each coordinate isopentenyl diphosphate.

This sequence belongs to the IspH family. Requires [4Fe-4S] cluster as cofactor.

The catalysed reaction is isopentenyl diphosphate + 2 oxidized [2Fe-2S]-[ferredoxin] + H2O = (2E)-4-hydroxy-3-methylbut-2-enyl diphosphate + 2 reduced [2Fe-2S]-[ferredoxin] + 2 H(+). The enzyme catalyses dimethylallyl diphosphate + 2 oxidized [2Fe-2S]-[ferredoxin] + H2O = (2E)-4-hydroxy-3-methylbut-2-enyl diphosphate + 2 reduced [2Fe-2S]-[ferredoxin] + 2 H(+). It functions in the pathway isoprenoid biosynthesis; dimethylallyl diphosphate biosynthesis; dimethylallyl diphosphate from (2E)-4-hydroxy-3-methylbutenyl diphosphate: step 1/1. Its pathway is isoprenoid biosynthesis; isopentenyl diphosphate biosynthesis via DXP pathway; isopentenyl diphosphate from 1-deoxy-D-xylulose 5-phosphate: step 6/6. Functionally, catalyzes the conversion of 1-hydroxy-2-methyl-2-(E)-butenyl 4-diphosphate (HMBPP) into a mixture of isopentenyl diphosphate (IPP) and dimethylallyl diphosphate (DMAPP). Acts in the terminal step of the DOXP/MEP pathway for isoprenoid precursor biosynthesis. This chain is 4-hydroxy-3-methylbut-2-enyl diphosphate reductase, found in Roseobacter denitrificans (strain ATCC 33942 / OCh 114) (Erythrobacter sp. (strain OCh 114)).